Reading from the N-terminus, the 91-residue chain is UPF0386 protein CC_0226 (91 aa).

Belongs to the UPF0386 family.

This Caulobacter vibrioides (strain ATCC 19089 / CIP 103742 / CB 15) (Caulobacter crescentus) protein is UPF0386 protein CC_0226.